The chain runs to 38 residues: Histidine decarboxylase small chain (38 aa).

As to quaternary structure, heterohexamer of 3 large and 3 small chains. It depends on pyruvate as a cofactor.

The catalysed reaction is L-histidine + H(+) = histamine + CO2. This chain is Histidine decarboxylase small chain, found in Micrococcus sp.